Here is a 338-residue protein sequence, read N- to C-terminus: Phenylalanine--tRNA ligase alpha subunit (338 aa).

Glu253 provides a ligand contact to Mg(2+).

This sequence belongs to the class-II aminoacyl-tRNA synthetase family. Phe-tRNA synthetase alpha subunit type 1 subfamily. Tetramer of two alpha and two beta subunits. Mg(2+) is required as a cofactor.

The protein localises to the cytoplasm. The catalysed reaction is tRNA(Phe) + L-phenylalanine + ATP = L-phenylalanyl-tRNA(Phe) + AMP + diphosphate + H(+). The chain is Phenylalanine--tRNA ligase alpha subunit from Pelobacter propionicus (strain DSM 2379 / NBRC 103807 / OttBd1).